The chain runs to 206 residues: Large ribosomal subunit protein uL3 (206 aa).

The tract at residues 127-151 (SGGPSSHGSKFHRHLGGTGQATTPA) is disordered.

It belongs to the universal ribosomal protein uL3 family. As to quaternary structure, part of the 50S ribosomal subunit. Forms a cluster with proteins L14 and L19.

Its function is as follows. One of the primary rRNA binding proteins, it binds directly near the 3'-end of the 23S rRNA, where it nucleates assembly of the 50S subunit. The chain is Large ribosomal subunit protein uL3 from Borreliella burgdorferi (strain ZS7) (Borrelia burgdorferi).